We begin with the raw amino-acid sequence, 266 residues long: Protein SCO2 homolog, mitochondrial (266 aa).

The transit peptide at 1–41 (MLLLTRSPTAWHRLSQLKPRVLPGTLGGQALHLRSWLLSRQ) directs the protein to the mitochondrion. Residues 42 to 60 (GPAETGGQGQPQGPGLRTR) lie on the Mitochondrial matrix side of the membrane. The helical transmembrane segment at 61–78 (LLITGLFGAGLGGAWLAL) threads the bilayer. At 79 to 266 (RAEKERLQQQ…HMAAFRSVLS (188 aa)) the chain is on the mitochondrial intermembrane side. Residues 85-259 (LQQQKRTEAL…ISDSVRRHMA (175 aa)) form the Thioredoxin domain. The Cu cation site is built by C133, C137, and H224. A disulfide bond links C133 and C137.

The protein belongs to the SCO1/2 family. In terms of assembly, homodimer. Interacts with COA6. Found in a complex with TMEM177, COX20, COA6, MT-CO2/COX2, COX18 and SCO1. Interacts with TMEM177 in a COX20-dependent manner. Interacts with COX20 in a MT-CO2/COX2- and COX18-dependent manner. Interacts with COX16. In terms of tissue distribution, ubiquitous.

The protein resides in the mitochondrion inner membrane. Copper metallochaperone essential for the synthesis and maturation of cytochrome c oxidase subunit II (MT-CO2/COX2) by facilitating the incorporation of copper into the Cu(A) site of MT-CO2/COX2. Could also act as a thiol-disulfide oxidoreductase to regulate the redox state of the cysteines in SCO1 during maturation of MT-CO2/COX2. This is Protein SCO2 homolog, mitochondrial (SCO2) from Homo sapiens (Human).